Reading from the N-terminus, the 181-residue chain is Trafficking protein particle complex subunit 3 homolog (181 aa).

C70 carries S-palmitoyl cysteine lipidation.

Belongs to the TRAPP small subunits family. BET3 subfamily. Homodimer. Part of the multisubunit TRAPP (transport protein particle) complex.

The protein localises to the golgi apparatus. Its subcellular location is the cis-Golgi network. The protein resides in the endoplasmic reticulum. Its function is as follows. May play a role in vesicular transport from endoplasmic reticulum to Golgi. Required for the systemic spread of the RNAi response. The sequence is that of Trafficking protein particle complex subunit 3 homolog (trpp-3) from Caenorhabditis elegans.